The sequence spans 628 residues: (+)-alpha pinene synthase 1, chloroplastic (628 aa).

A chloroplast-targeting transit peptide spans 1–18 (MALVSAVPLNSKLCLCRT). Residues D379, D383, and D531 each contribute to the Mg(2+) site. A DDXXD motif motif is present at residues 379 to 383 (DDIYD).

It belongs to the terpene synthase family. Tpsd subfamily. The cofactor is Mg(2+). Mn(2+) serves as cofactor.

It is found in the plastid. The protein resides in the chloroplast. The catalysed reaction is (2E)-geranyl diphosphate = (1R,5R)-alpha-pinene + diphosphate. It functions in the pathway terpene metabolism; oleoresin biosynthesis. It participates in secondary metabolite biosynthesis; terpenoid biosynthesis. Functionally, monoterpene synthase (TPS) involved in the biosynthesis of monoterpene natural products included in conifer oleoresin secretions and volatile emissions; these compounds contribute to biotic and abiotic stress defense against herbivores and pathogens. Catalyzes the conversion of (2E)-geranyl diphosphate (GPP) to (+)-alpha-pinene. This Pinus banksiana (Jack pine) protein is (+)-alpha pinene synthase 1, chloroplastic.